The primary structure comprises 434 residues: 26S proteasome regulatory subunit 6A (434 aa).

The residue at position 2 (Ala-2) is an N-acetylalanine. Tyr-180 is modified (phosphotyrosine). 222–229 (GPPGTGKT) lines the ATP pocket.

This sequence belongs to the AAA ATPase family. In terms of processing, N-acetylated by NAT1.

Its subcellular location is the cytoplasm. It is found in the nucleus. In terms of biological role, the 26S proteasome is involved in the ATP-dependent degradation of ubiquitinated proteins. The regulatory (or ATPase) complex confers ATP dependency and substrate specificity to the 26S complex. The polypeptide is 26S proteasome regulatory subunit 6A (RPT5) (Saccharomyces cerevisiae (strain ATCC 204508 / S288c) (Baker's yeast)).